A 355-amino-acid polypeptide reads, in one-letter code: Methionine import ATP-binding protein MetN (355 aa).

Residues 8 to 250 (LKNIDITFTQ…PQEDLTQEFI (243 aa)) enclose the ABC transporter domain. Position 42–49 (42–49 (GYSGAGKS)) interacts with ATP.

Belongs to the ABC transporter superfamily. Methionine importer (TC 3.A.1.24) family. As to quaternary structure, the complex is composed of two ATP-binding proteins (MetN), two transmembrane proteins (MetI) and a solute-binding protein (MetQ).

The protein localises to the cell membrane. It carries out the reaction L-methionine(out) + ATP + H2O = L-methionine(in) + ADP + phosphate + H(+). It catalyses the reaction D-methionine(out) + ATP + H2O = D-methionine(in) + ADP + phosphate + H(+). Functionally, part of the ABC transporter complex MetNIQ involved in methionine import. Responsible for energy coupling to the transport system. This is Methionine import ATP-binding protein MetN from Streptococcus thermophilus (strain ATCC BAA-250 / LMG 18311).